The sequence spans 200 residues: ATP-dependent Clp protease proteolytic subunit (200 aa).

Ser101 functions as the Nucleophile in the catalytic mechanism. His126 is a catalytic residue.

Belongs to the peptidase S14 family. Component of the chloroplastic Clp protease core complex.

The protein resides in the plastid. It localises to the chloroplast stroma. The catalysed reaction is Hydrolysis of proteins to small peptides in the presence of ATP and magnesium. alpha-casein is the usual test substrate. In the absence of ATP, only oligopeptides shorter than five residues are hydrolyzed (such as succinyl-Leu-Tyr-|-NHMec, and Leu-Tyr-Leu-|-Tyr-Trp, in which cleavage of the -Tyr-|-Leu- and -Tyr-|-Trp bonds also occurs).. In terms of biological role, cleaves peptides in various proteins in a process that requires ATP hydrolysis. Has a chymotrypsin-like activity. Plays a major role in the degradation of misfolded proteins. This Adiantum capillus-veneris (Maidenhair fern) protein is ATP-dependent Clp protease proteolytic subunit.